Here is a 238-residue protein sequence, read N- to C-terminus: Pyridoxine 5'-phosphate synthase (238 aa).

Asparagine 7 and arginine 18 together coordinate 3-amino-2-oxopropyl phosphate. Histidine 43 (proton acceptor) is an active-site residue. Residues arginine 45 and histidine 50 each contribute to the 1-deoxy-D-xylulose 5-phosphate site. The active-site Proton acceptor is the glutamate 70. Threonine 100 contacts 1-deoxy-D-xylulose 5-phosphate. The active-site Proton donor is histidine 190. 3-amino-2-oxopropyl phosphate contacts are provided by residues aspartate 191 and 213-214 (GH).

This sequence belongs to the PNP synthase family. In terms of assembly, homooctamer; tetramer of dimers.

It localises to the cytoplasm. The catalysed reaction is 3-amino-2-oxopropyl phosphate + 1-deoxy-D-xylulose 5-phosphate = pyridoxine 5'-phosphate + phosphate + 2 H2O + H(+). Its pathway is cofactor biosynthesis; pyridoxine 5'-phosphate biosynthesis; pyridoxine 5'-phosphate from D-erythrose 4-phosphate: step 5/5. Functionally, catalyzes the complicated ring closure reaction between the two acyclic compounds 1-deoxy-D-xylulose-5-phosphate (DXP) and 3-amino-2-oxopropyl phosphate (1-amino-acetone-3-phosphate or AAP) to form pyridoxine 5'-phosphate (PNP) and inorganic phosphate. The polypeptide is Pyridoxine 5'-phosphate synthase (Phocaeicola vulgatus (strain ATCC 8482 / DSM 1447 / JCM 5826 / CCUG 4940 / NBRC 14291 / NCTC 11154) (Bacteroides vulgatus)).